Here is a 469-residue protein sequence, read N- to C-terminus: Cysteine--tRNA ligase (469 aa).

C33 contacts Zn(2+). A 'HIGH' region motif is present at residues 35-45 (ATVQGLPHIGH). Positions 211, 236, and 240 each coordinate Zn(2+). The 'KMSKS' region motif lies at 267–271 (KMSKS). Residue K270 coordinates ATP.

It belongs to the class-I aminoacyl-tRNA synthetase family. As to quaternary structure, monomer. Requires Zn(2+) as cofactor.

The protein resides in the cytoplasm. It carries out the reaction tRNA(Cys) + L-cysteine + ATP = L-cysteinyl-tRNA(Cys) + AMP + diphosphate. This Mycobacterium tuberculosis (strain CDC 1551 / Oshkosh) protein is Cysteine--tRNA ligase (cysS).